The primary structure comprises 253 residues: BRI3-binding protein (253 aa).

4 helical membrane-spanning segments follow: residues 19 to 39 (VLLP…PGAQ), 131 to 151 (ALVL…TLGF), 164 to 181 (FWLV…YILH), and 190 to 210 (AVLP…MGYW). A coiled-coil region spans residues 219-253 (SPSVEEKLEHLENQVRLLNIRLNRVLENLDRSKDK). The residue at position 250 (S250) is a Phosphoserine.

As to quaternary structure, interacts with LETMD1. Interacts with BRI3. Interacts with BRI3; the interaction is weak. Interacts with TMEM238L.

It localises to the mitochondrion outer membrane. Functionally, involved in tumorigenesis and may function by stabilizing p53/TP53. In Mus musculus (Mouse), this protein is BRI3-binding protein.